Reading from the N-terminus, the 89-residue chain is Small ribosomal subunit protein uS15 (89 aa).

The protein belongs to the universal ribosomal protein uS15 family. Part of the 30S ribosomal subunit. Forms a bridge to the 50S subunit in the 70S ribosome, contacting the 23S rRNA.

Functionally, one of the primary rRNA binding proteins, it binds directly to 16S rRNA where it helps nucleate assembly of the platform of the 30S subunit by binding and bridging several RNA helices of the 16S rRNA. Its function is as follows. Forms an intersubunit bridge (bridge B4) with the 23S rRNA of the 50S subunit in the ribosome. The polypeptide is Small ribosomal subunit protein uS15 (Bradyrhizobium sp. (strain ORS 278)).